The following is a 258-amino-acid chain: Axonemal dynein light intermediate polypeptide 1 (258 aa).

Disordered stretches follow at residues 1 to 60 and 202 to 231; these read MIPP…CVPD and DLER…EEKK. Residues 176 to 255 are a coiled coil; that stretch reads MRKALQAEQG…LKAQLEGIIA (80 aa).

Belongs to the inner dynein arm light chain family. Interacts with CFAP45. Interacts with DYNC1H1. In terms of tissue distribution, predominantly expressed in the testis, also detected at lower levels in several tissues expressing cilia. Strongly expressed in elongating spermatid cells (at protein level).

Its subcellular location is the cell projection. The protein localises to the cilium. The protein resides in the flagellum. It is found in the dynein axonemal particle. It localises to the cytoplasm. Functionally, involved in sperm flagellum assembly. This is Axonemal dynein light intermediate polypeptide 1 from Mus musculus (Mouse).